Here is a 79-residue protein sequence, read N- to C-terminus: D-alanyl carrier protein (79 aa).

The 78-residue stretch at 2-79 (AEFKEQVLDI…MVIKKLEEIR (78 aa)) folds into the Carrier domain. Serine 37 is modified (O-(pantetheine 4'-phosphoryl)serine).

It belongs to the DltC family. In terms of processing, 4'-phosphopantetheine is transferred from CoA to a specific serine of apo-DCP.

It localises to the cytoplasm. It functions in the pathway cell wall biogenesis; lipoteichoic acid biosynthesis. Carrier protein involved in the D-alanylation of lipoteichoic acid (LTA). The loading of thioester-linked D-alanine onto DltC is catalyzed by D-alanine--D-alanyl carrier protein ligase DltA. The DltC-carried D-alanyl group is further transferred to cell membrane phosphatidylglycerol (PG) by forming an ester bond, probably catalyzed by DltD. D-alanylation of LTA plays an important role in modulating the properties of the cell wall in Gram-positive bacteria, influencing the net charge of the cell wall. The protein is D-alanyl carrier protein of Bacillus mycoides (strain KBAB4) (Bacillus weihenstephanensis).